A 267-amino-acid polypeptide reads, in one-letter code: Thiamine thiazole synthase (267 aa).

NAD(+)-binding positions include Ser41, 60-61, Gly68, Val132, and 160-162; these read ER and HVD. Fe cation contacts are provided by Asp162 and His177. Position 227 (Met227) interacts with NAD(+). Residue Arg237 participates in glycine binding.

Belongs to the THI4 family. In terms of assembly, homooctamer; tetramer of dimers. Fe(2+) serves as cofactor.

The catalysed reaction is hydrogen sulfide + glycine + NAD(+) = ADP-5-ethyl-4-methylthiazole-2-carboxylate + nicotinamide + 3 H2O + H(+). The protein operates within cofactor biosynthesis; thiamine diphosphate biosynthesis. Its function is as follows. Involved in the biosynthesis of the thiazole moiety of thiamine. Catalyzes the conversion of NAD and glycine to adenosine diphosphate 5-(2-hydroxyethyl)-4-methylthiazole-2-carboxylate (ADT), an adenylated thiazole intermediate, using free sulfide as a source of sulfur. This chain is Thiamine thiazole synthase, found in Saccharolobus solfataricus (strain ATCC 35092 / DSM 1617 / JCM 11322 / P2) (Sulfolobus solfataricus).